Here is a 419-residue protein sequence, read N- to C-terminus: Glutamyl-tRNA reductase (419 aa).

Residues 49 to 52 (TCNR), Ser107, 112 to 114 (EPQ), and Gln118 each bind substrate. The active-site Nucleophile is the Cys50. 187–192 (GAGETI) serves as a coordination point for NADP(+).

It belongs to the glutamyl-tRNA reductase family. Homodimer.

The enzyme catalyses (S)-4-amino-5-oxopentanoate + tRNA(Glu) + NADP(+) = L-glutamyl-tRNA(Glu) + NADPH + H(+). The protein operates within porphyrin-containing compound metabolism; protoporphyrin-IX biosynthesis; 5-aminolevulinate from L-glutamyl-tRNA(Glu): step 1/2. In terms of biological role, catalyzes the NADPH-dependent reduction of glutamyl-tRNA(Glu) to glutamate 1-semialdehyde (GSA). The polypeptide is Glutamyl-tRNA reductase (Vibrio vulnificus (strain CMCP6)).